Consider the following 399-residue polypeptide: Chaperone protein DnaJ 1 (399 aa).

Positions 10–75 (DYYKVLGVPK…KKRKEYDEAR (66 aa)) constitute a J domain. Residues 166-244 (GATVPLRMSS…CKGSGRAKSS (79 aa)) form a CR-type zinc finger. Positions 179, 182, 195, 198, 218, 221, 232, and 235 each coordinate Zn(2+). 4 CXXCXGXG motif repeats span residues 179–186 (CKACSGTG), 195–202 (CPTCVGTG), 218–225 (CPDCKGRG), and 232–239 (CEVCKGSG).

Belongs to the DnaJ family. Homodimer. Requires Zn(2+) as cofactor.

The protein localises to the cytoplasm. Participates actively in the response to hyperosmotic and heat shock by preventing the aggregation of stress-denatured proteins and by disaggregating proteins, also in an autonomous, DnaK-independent fashion. Unfolded proteins bind initially to DnaJ; upon interaction with the DnaJ-bound protein, DnaK hydrolyzes its bound ATP, resulting in the formation of a stable complex. GrpE releases ADP from DnaK; ATP binding to DnaK triggers the release of the substrate protein, thus completing the reaction cycle. Several rounds of ATP-dependent interactions between DnaJ, DnaK and GrpE are required for fully efficient folding. Also involved, together with DnaK and GrpE, in the DNA replication of plasmids through activation of initiation proteins. The sequence is that of Chaperone protein DnaJ 1 from Streptomyces coelicolor (strain ATCC BAA-471 / A3(2) / M145).